Reading from the N-terminus, the 677-residue chain is Sulfate transporter 2.2 (677 aa).

Topologically, residues M1–D110 are cytoplasmic. The helical transmembrane segment at L111–L131 threads the bilayer. Over A132 to G133 the chain is Extracellular. A helical membrane pass occupies residues L134–G154. Residues T155–E158 lie on the Cytoplasmic side of the membrane. The chain crosses the membrane as a helical span at residues L159–Q179. The Extracellular segment spans residues D180–K190. A helical transmembrane segment spans residues I191–L211. The Cytoplasmic segment spans residues G212 to F213. Residues L214–I234 traverse the membrane as a helical segment. Residues G235–Q270 lie on the Extracellular side of the membrane. N-linked (GlcNAc...) asparagine glycosylation occurs at N250. A helical transmembrane segment spans residues P271–G291. The Cytoplasmic segment spans residues K292 to K296. The helical transmembrane segment at L297 to Y317 threads the bilayer. At L318–G352 the chain is on the extracellular side. Residues Q353–G373 form a helical membrane-spanning segment. The Cytoplasmic segment spans residues R374 to E389. Residues M390 to G410 form a helical membrane-spanning segment. Topologically, residues S411–G422 are extracellular. An N-linked (GlcNAc...) asparagine glycan is attached at N418. Residues C423–L443 form a helical membrane-spanning segment. Residues T444 to F446 are Cytoplasmic-facing. A helical transmembrane segment spans residues L447–I467. Residues D468–D482 lie on the Extracellular side of the membrane. A helical membrane pass occupies residues F483–L503. Topologically, residues L504–C677 are cytoplasmic. The STAS domain occupies Y540–Y666.

It belongs to the SLC26A/SulP transporter (TC 2.A.53) family. In terms of tissue distribution, expressed in the phloem in roots and in the phloem of vascular bundles in leaves.

The protein resides in the membrane. Its function is as follows. Low-affinity H(+)/sulfate cotransporter that may be involved in the distribution of sulfate from vascular bundles to the palisade cells of the leaves. Plays a central role in the regulation of sulfate assimilation. This is Sulfate transporter 2.2 (SULTR2;2) from Arabidopsis thaliana (Mouse-ear cress).